A 314-amino-acid chain; its full sequence is Mitochondrial 2-oxoglutarate/malate carrier protein (314 aa).

N-acetylalanine is present on A2. S6 is subject to Phosphoserine. 3 Solcar repeats span residues 23–108 (VKFL…LFER), 117–208 (PGFL…SKQF), and 217–306 (DNIL…MNKA). The helical transmembrane segment at 24–42 (KFLFGGLAGMGATVFVQPL) threads the bilayer. K57 is subject to N6-succinyllysine. N6-acetyllysine is present on K73. A helical transmembrane segment spans residues 83 to 101 (GLSAGLLRQATYTTTRLGI). Y102 carries the phosphotyrosine modification. Helical transmembrane passes span 119–140 (FLLKALIGMTAGATGAFVGTPA), 183–202 (GCIPTMARAVVVNAAQLASY), and 222–240 (HFCASMISGLVTTAASMPV). N6-acetyllysine is present on K256. A helical membrane pass occupies residues 281-300 (GFTPYYARLGPHTVLTFIFL).

Belongs to the mitochondrial carrier (TC 2.A.29) family. Interacts with SMIM26.

Its subcellular location is the mitochondrion inner membrane. The enzyme catalyses (S)-malate(in) + 2-oxoglutarate(out) = (S)-malate(out) + 2-oxoglutarate(in). It catalyses the reaction malonate(in) + 2-oxoglutarate(out) = malonate(out) + 2-oxoglutarate(in). It carries out the reaction succinate(in) + 2-oxoglutarate(out) = succinate(out) + 2-oxoglutarate(in). The catalysed reaction is maleate(in) + 2-oxoglutarate(out) = maleate(out) + 2-oxoglutarate(in). The enzyme catalyses oxaloacetate(in) + 2-oxoglutarate(out) = oxaloacetate(out) + 2-oxoglutarate(in). Functionally, catalyzes the transport of 2-oxoglutarate (alpha-oxoglutarate) across the inner mitochondrial membrane in an electroneutral exchange for malate. Can also exchange 2-oxoglutarate for other dicarboxylic acids such as malonate, succinate, maleate and oxaloacetate, although with lower affinity. Contributes to several metabolic processes, including the malate-aspartate shuttle, the oxoglutarate/isocitrate shuttle, in gluconeogenesis from lactate, and in nitrogen metabolism. Maintains mitochondrial fusion and fission events, and the organization and morphology of cristae. Involved in the regulation of apoptosis. Helps protect from cytotoxic-induced apoptosis by modulating glutathione levels in mitochondria. This Mus musculus (Mouse) protein is Mitochondrial 2-oxoglutarate/malate carrier protein (Slc25a11).